The primary structure comprises 702 residues: ATP-dependent zinc metalloprotease FtsH (702 aa).

Over 1 to 26 (MKKRNKGLVEQTTTEKNNFSRKTAWK) the chain is Cytoplasmic. The helical transmembrane segment at 27-47 (VFWWVIILAVVIGVLAYIFSP) threads the bilayer. Residues 48–175 (RAATAVVESW…FIAPDTRARD (128 aa)) lie on the Extracellular side of the membrane. The chain crosses the membrane as a helical span at residues 176 to 196 (VLNGLFGLLPIIIFVVFFLLF). Over 197-702 (WRSARGISAG…EVKPESETNS (506 aa)) the chain is Cytoplasmic. 271 to 278 (GPPGTGKT) serves as a coordination point for ATP. Histidine 493 serves as a coordination point for Zn(2+). Glutamate 494 is an active-site residue. Histidine 497 and aspartate 572 together coordinate Zn(2+). The segment at 682–702 (EQQAKQKLNKSEVKPESETNS) is disordered. Residues 690 to 702 (NKSEVKPESETNS) are compositionally biased toward basic and acidic residues.

The protein in the central section; belongs to the AAA ATPase family. This sequence in the C-terminal section; belongs to the peptidase M41 family. As to quaternary structure, homohexamer. Requires Zn(2+) as cofactor.

It is found in the cell membrane. Its function is as follows. Acts as a processive, ATP-dependent zinc metallopeptidase for both cytoplasmic and membrane proteins. Plays a role in the quality control of integral membrane proteins. The sequence is that of ATP-dependent zinc metalloprotease FtsH from Mycoplasma genitalium (strain ATCC 33530 / DSM 19775 / NCTC 10195 / G37) (Mycoplasmoides genitalium).